A 1413-amino-acid polypeptide reads, in one-letter code: DNA-directed RNA polymerase subunit beta' (1413 aa).

Residues C70, C72, C85, and C88 each contribute to the Zn(2+) site. D461, D463, and D465 together coordinate Mg(2+). 4 residues coordinate Zn(2+): C820, C894, C901, and C904.

Belongs to the RNA polymerase beta' chain family. The RNAP catalytic core consists of 2 alpha, 1 beta, 1 beta' and 1 omega subunit. When a sigma factor is associated with the core the holoenzyme is formed, which can initiate transcription. Mg(2+) is required as a cofactor. Zn(2+) serves as cofactor.

The catalysed reaction is RNA(n) + a ribonucleoside 5'-triphosphate = RNA(n+1) + diphosphate. Functionally, DNA-dependent RNA polymerase catalyzes the transcription of DNA into RNA using the four ribonucleoside triphosphates as substrates. The sequence is that of DNA-directed RNA polymerase subunit beta' from Cupriavidus metallidurans (strain ATCC 43123 / DSM 2839 / NBRC 102507 / CH34) (Ralstonia metallidurans).